The following is a 70-amino-acid chain: MKADIHPAYAEITATCTCGNVIKVNSTAGKALHLDVCGACHPFYTGTQKIVDTGGRIDKFNKRFGALGKK.

4 residues coordinate Zn(2+): Cys16, Cys18, Cys37, and Cys40.

This sequence belongs to the bacterial ribosomal protein bL31 family. Type A subfamily. As to quaternary structure, part of the 50S ribosomal subunit. Zn(2+) serves as cofactor.

Binds the 23S rRNA. This is Large ribosomal subunit protein bL31 from Shewanella sediminis (strain HAW-EB3).